Consider the following 310-residue polypeptide: Olfactory receptor 9A2 (310 aa).

Over 1–24 the chain is Extracellular; it reads MMDNHSSATEFHLLGFPGSQGLHH. N4 is a glycosylation site (N-linked (GlcNAc...) asparagine). The chain crosses the membrane as a helical span at residues 25 to 45; that stretch reads ILFAIFFFFYLVTLMGNTVII. Residues 46 to 53 are Cytoplasmic-facing; sequence VIVCVDKR. Residues 54–74 traverse the membrane as a helical segment; that stretch reads LQSPMYFFLSHLSTLEILVTT. Topologically, residues 75–98 are extracellular; sequence IIVPMMLWGLLFLGCRQYLSLHVS. At 117–135 the chain is on the cytoplasmic side; it reads DRYVAVCNPLRYNIIMNSS. Residues 136 to 156 form a helical membrane-spanning segment; sequence TCIWVVIVSWVFGFLSEIWPI. Residues 157–193 lie on the Extracellular side of the membrane; that stretch reads YATFQFTFRKSNSLDHFYCDRGQLLKLSCDNTLLTEF. A helical membrane pass occupies residues 194–213; it reads ILFLMAVFILIGSLIPTIVS. Residues 214 to 233 are Cytoplasmic-facing; that stretch reads YTYIISTILKIPSASGRRKA. Residues 234–254 traverse the membrane as a helical segment; that stretch reads FSTFASHFTCVVIGYGSCLFL. Topologically, residues 255 to 267 are extracellular; the sequence is YVKPKQTQGVEYN. The chain crosses the membrane as a helical span at residues 268 to 288; that stretch reads KIVSLLVSVLTPFLNPFIFTL. The Cytoplasmic portion of the chain corresponds to 289–310; it reads RNDKVKEALRDGMKRCCQLLKD.

It belongs to the G-protein coupled receptor 1 family.

The protein resides in the cell membrane. Functionally, odorant receptor. This is Olfactory receptor 9A2 (OR9A2) from Homo sapiens (Human).